An 806-amino-acid polypeptide reads, in one-letter code: Glycerol-3-phosphate acyltransferase (806 aa).

An HXXXXD motif motif is present at residues 305–310 (CHRSHM).

This sequence belongs to the GPAT/DAPAT family.

Its subcellular location is the cell inner membrane. It catalyses the reaction sn-glycerol 3-phosphate + an acyl-CoA = a 1-acyl-sn-glycero-3-phosphate + CoA. It participates in phospholipid metabolism; CDP-diacylglycerol biosynthesis; CDP-diacylglycerol from sn-glycerol 3-phosphate: step 1/3. The chain is Glycerol-3-phosphate acyltransferase from Salmonella arizonae (strain ATCC BAA-731 / CDC346-86 / RSK2980).